Here is a 110-residue protein sequence, read N- to C-terminus: DNA-binding protein Pars_1791 (110 aa).

This sequence belongs to the PDCD5 family.

In Pyrobaculum arsenaticum (strain DSM 13514 / JCM 11321 / PZ6), this protein is DNA-binding protein Pars_1791.